The sequence spans 158 residues: Phosphopantetheine adenylyltransferase (158 aa).

Position 9 (S9) interacts with substrate. Residues 9–10 and H17 contribute to the ATP site; that span reads SF. Positions 41, 73, and 87 each coordinate substrate. ATP is bound by residues 88-90, E98, and 122-128; these read GLR and NQNISSS.

The protein belongs to the bacterial CoaD family. Homohexamer. Requires Mg(2+) as cofactor.

It localises to the cytoplasm. The enzyme catalyses (R)-4'-phosphopantetheine + ATP + H(+) = 3'-dephospho-CoA + diphosphate. The protein operates within cofactor biosynthesis; coenzyme A biosynthesis; CoA from (R)-pantothenate: step 4/5. Reversibly transfers an adenylyl group from ATP to 4'-phosphopantetheine, yielding dephospho-CoA (dPCoA) and pyrophosphate. This chain is Phosphopantetheine adenylyltransferase, found in Leuconostoc citreum (strain KM20).